The following is a 449-amino-acid chain: Amidophosphoribosyltransferase (449 aa).

Positions 1–9 are excised as a propeptide; that stretch reads MRGEIMKEK. Cysteine 10 (nucleophile) is an active-site residue. One can recognise a Glutamine amidotransferase type-2 domain in the interval 10–224; sequence CGIFGAYSQD…PGEVIVVKDG (215 aa). Cysteine 239 serves as a coordination point for [4Fe-4S] cluster. Mg(2+) contacts are provided by serine 286, aspartate 346, and aspartate 347. Cysteine 383, cysteine 432, and cysteine 435 together coordinate [4Fe-4S] cluster.

The protein in the C-terminal section; belongs to the purine/pyrimidine phosphoribosyltransferase family. Requires Mg(2+) as cofactor. The cofactor is [4Fe-4S] cluster.

The enzyme catalyses 5-phospho-beta-D-ribosylamine + L-glutamate + diphosphate = 5-phospho-alpha-D-ribose 1-diphosphate + L-glutamine + H2O. Its pathway is purine metabolism; IMP biosynthesis via de novo pathway; N(1)-(5-phospho-D-ribosyl)glycinamide from 5-phospho-alpha-D-ribose 1-diphosphate: step 1/2. Its function is as follows. Catalyzes the formation of phosphoribosylamine from phosphoribosylpyrophosphate (PRPP) and glutamine. In Pyrococcus horikoshii (strain ATCC 700860 / DSM 12428 / JCM 9974 / NBRC 100139 / OT-3), this protein is Amidophosphoribosyltransferase.